The chain runs to 365 residues: MTKMSKLPNDLLEEILSRSPLYSMRAIRLTCKKWNTLAKEESFTKKQLVQTKAAKEFMVIMMMDSKFCLMNINLNKEEDVEPSIKCNGKIINPIGMCRVYHCGGLVCITKSFSNTRDVVWNPYLGQTRWIKPRSHHAYIYAIGYETKKSCRSYKILSSEHNYINIDDERVDYEIYELDSNSWRALDVNSNWATAFYKMDVSVKGNSYTYTDYRGDFLISFDFTTERFGPTLPLPFHSRCGDIVALSSVREEKLAVLLHRCNISRMEIWITNKIEPNNVSWGKLFLTVDMKPLIIDDGIFFIDEEKKVVVVFDKDKEMRNRITAYIIGENGYFRKVDLGDSESFPVRCSYVPSSVEIKQLAKGKSN.

Residues 1–47 enclose the F-box domain; sequence MTKMSKLPNDLLEEILSRSPLYSMRAIRLTCKKWNTLAKEESFTKKQ. Kelch repeat units lie at residues 98 to 149 and 155 to 205; these read RVYH…TKKS and ILSS…VKGN.

This is Putative F-box/kelch-repeat protein At3g16880 from Arabidopsis thaliana (Mouse-ear cress).